A 31-amino-acid chain; its full sequence is Palustrin-2c (31 aa).

Cys23 and Cys29 are oxidised to a cystine.

As to expression, expressed by the skin glands.

The protein resides in the secreted. Its function is as follows. Antimicrobial activity against Gram-negative bacterium E.coli. The chain is Palustrin-2c from Lithobates palustris (Pickerel frog).